Consider the following 249-residue polypeptide: MELKIDTHSHTYASGHAYSTLIENARSAKENGLAMFCTTDHAESMPGAPHYWFFANQRVLPRFLEGVAILRGVEANILNTEGEIDLPLSVDPNLDWAIASFHEPVFAPSNKEAHTQALLNVIQGGRIDALGHLGNPHFDFDFHAVLHCAKDHNVAIEINNSTLKGHSRVGSVERCYEIARVGKALGVYFTTGSDAHFCQDVGKLDLASELLDSVGIDSHRVITHSPSQFLDFLELRGRGPIDELASLRQ.

Residues His8, His10, His16, His41, Glu74, His102, His132, Asp194, and His196 each coordinate Zn(2+).

It belongs to the PHP family. Requires Zn(2+) as cofactor.

The protein is Probable phosphatase VV2_1469 of Vibrio vulnificus (strain CMCP6).